A 229-amino-acid chain; its full sequence is Ribonuclease 3 (229 aa).

An RNase III domain is found at 5-127; sequence LSRLERQLGY…LIGAIYLDAG (123 aa). A Mg(2+)-binding site is contributed by glutamate 40. Aspartate 44 is an active-site residue. Mg(2+) is bound by residues aspartate 113 and glutamate 116. The active site involves glutamate 116. The DRBM domain maps to 154–224; it reads DPKTRLQEFL…AAAALIALGV (71 aa).

The protein belongs to the ribonuclease III family. As to quaternary structure, homodimer. Requires Mg(2+) as cofactor.

The protein resides in the cytoplasm. The enzyme catalyses Endonucleolytic cleavage to 5'-phosphomonoester.. Functionally, digests double-stranded RNA. Involved in the processing of primary rRNA transcript to yield the immediate precursors to the large and small rRNAs (23S and 16S). Processes some mRNAs, and tRNAs when they are encoded in the rRNA operon. Processes pre-crRNA and tracrRNA of type II CRISPR loci if present in the organism. This Pseudomonas syringae pv. syringae (strain B728a) protein is Ribonuclease 3.